Reading from the N-terminus, the 430-residue chain is 3-phosphoshikimate 1-carboxyvinyltransferase (430 aa).

The 3-phosphoshikimate site is built by Lys-33, Ser-34, and Arg-38. Phosphoenolpyruvate is bound at residue Lys-33. Phosphoenolpyruvate-binding residues include Gly-101 and Arg-129. Positions 172, 173, 174, 201, 319, and 346 each coordinate 3-phosphoshikimate. Phosphoenolpyruvate is bound at residue Gln-174. Glu-319 acts as the Proton acceptor in catalysis. Residues Arg-350, Arg-391, and Lys-416 each coordinate phosphoenolpyruvate.

The protein belongs to the EPSP synthase family. Monomer.

It localises to the cytoplasm. It catalyses the reaction 3-phosphoshikimate + phosphoenolpyruvate = 5-O-(1-carboxyvinyl)-3-phosphoshikimate + phosphate. The protein operates within metabolic intermediate biosynthesis; chorismate biosynthesis; chorismate from D-erythrose 4-phosphate and phosphoenolpyruvate: step 6/7. In terms of biological role, catalyzes the transfer of the enolpyruvyl moiety of phosphoenolpyruvate (PEP) to the 5-hydroxyl of shikimate-3-phosphate (S3P) to produce enolpyruvyl shikimate-3-phosphate and inorganic phosphate. This is 3-phosphoshikimate 1-carboxyvinyltransferase from Corynebacterium glutamicum (strain ATCC 13032 / DSM 20300 / JCM 1318 / BCRC 11384 / CCUG 27702 / LMG 3730 / NBRC 12168 / NCIMB 10025 / NRRL B-2784 / 534).